The chain runs to 236 residues: MAATLLDVCAVVPAAGFGRRMQTECPKQYLSIGNKTILEHSVHALLAHPRVTRVVIAISPGDHRFAQLPLANHPQITVVDGGNERADSVLAGLQAVAKAQWVLVHDAARPCLHQDDLARLLAISENSRVGGILASPVRDTMKRGEPGKTAIAHTVERADLWHALTPQFFPRELLHDCLTRALNEGAIITDEASALEYCGFHPALVEGRADNIKVTRPEDLALAEFYLTRTIHQEKA.

The protein belongs to the IspD/TarI cytidylyltransferase family. IspD subfamily. Homodimer.

The catalysed reaction is 2-C-methyl-D-erythritol 4-phosphate + CTP + H(+) = 4-CDP-2-C-methyl-D-erythritol + diphosphate. It functions in the pathway isoprenoid biosynthesis; isopentenyl diphosphate biosynthesis via DXP pathway; isopentenyl diphosphate from 1-deoxy-D-xylulose 5-phosphate: step 2/6. In terms of biological role, catalyzes the formation of 4-diphosphocytidyl-2-C-methyl-D-erythritol from CTP and 2-C-methyl-D-erythritol 4-phosphate (MEP). This is 2-C-methyl-D-erythritol 4-phosphate cytidylyltransferase from Salmonella paratyphi A (strain ATCC 9150 / SARB42).